A 370-amino-acid polypeptide reads, in one-letter code: Probable pectin lyase E (370 aa).

A disulfide bridge links Cys-75 with Cys-96. Residue Arg-245 is part of the active site. Asn-307 is a glycosylation site (N-linked (GlcNAc...) asparagine). A disulfide bridge links Cys-311 with Cys-319.

This sequence belongs to the polysaccharide lyase 1 family.

It is found in the secreted. It carries out the reaction Eliminative cleavage of (1-&gt;4)-alpha-D-galacturonan methyl ester to give oligosaccharides with 4-deoxy-6-O-methyl-alpha-D-galact-4-enuronosyl groups at their non-reducing ends.. Pectinolytic enzymes consist of four classes of enzymes: pectin lyase, polygalacturonase, pectin methylesterase and rhamnogalacturonase. Among pectinolytic enzymes, pectin lyase is the most important in depolymerization of pectin, since it cleaves internal glycosidic bonds of highly methylated pectins. The sequence is that of Probable pectin lyase E (pelE) from Aspergillus niger.